A 603-amino-acid polypeptide reads, in one-letter code: Insulin-like growth factor-binding protein complex acid labile subunit (603 aa).

The signal sequence occupies residues 1–23; it reads MALRTGSPALVVLLAFWVALGPC. Residues 32–74 form the LRRNT domain; sequence ASADAEGPQCPVTCTCSYDDYTDELSVFCSSRNLTQLPDGIPV. Intrachain disulfides connect Cys41–Cys47 and Cys45–Cys60. N-linked (GlcNAc...) asparagine glycans are attached at residues Asn64, Asn85, and Asn96. LRR repeat units follow at residues 75–96, 99–120, 123–144, 147–168, 171–192, 195–216, 219–240, 243–264, 267–288, 291–312, 315–336, 339–360, 363–384, 387–408, 411–432, 435–456, 459–480, 483–504, and 507–528; these read STRA…AFQN, SLDF…ALLG, NLYH…LFRH, SLAS…LFRG, HLWD…VFQG, NLHE…LLCG, ELRE…VFIH, RLQK…AFLG, ALRW…TFPG, GLHV…TFKD, FLEE…TFEG, QLEV…AFFG, NVAV…VFQG, RLHS…TFAG, GLRR…SLAG, ELLE…LFQG, QLEY…VLGP, RAFW…LFSS, and RLRY…PGLE. N-linked (GlcNAc...) asparagine glycosylation occurs at Asn368. Asn515 carries an N-linked (GlcNAc...) asparagine glycan. Residues 535–603 enclose the LRRCT domain; it reads NPWDCSCPLK…DISETLFVHC (69 aa). 3 cysteine pairs are disulfide-bonded: Cys539-Cys581, Cys541-Cys603, and Cys565-Cys570. N-linked (GlcNAc...) asparagine glycosylation is found at Asn578 and Asn586.

Forms a ternary complex with IGF1 and IGFBP3.

Its subcellular location is the secreted. The protein localises to the extracellular space. In terms of biological role, may have an important role in regulating the access of circulating IGFs to the tissues. The chain is Insulin-like growth factor-binding protein complex acid labile subunit (Igfals) from Mus musculus (Mouse).